Consider the following 155-residue polypeptide: Small ribosomal subunit protein uS7 (155 aa).

This sequence belongs to the universal ribosomal protein uS7 family. In terms of assembly, part of the 30S ribosomal subunit. Contacts proteins S9 and S11.

In terms of biological role, one of the primary rRNA binding proteins, it binds directly to 16S rRNA where it nucleates assembly of the head domain of the 30S subunit. Is located at the subunit interface close to the decoding center, probably blocks exit of the E-site tRNA. The polypeptide is Small ribosomal subunit protein uS7 (Xanthomonas oryzae pv. oryzae (strain MAFF 311018)).